We begin with the raw amino-acid sequence, 26 residues long: Oxyopinin-3a (26 aa).

As to expression, expressed by the venom gland.

It localises to the secreted. Functionally, may have cytolytic and antimicrobial activity. This is Oxyopinin-3a from Oxyopes takobius (Lynx spider).